A 280-amino-acid polypeptide reads, in one-letter code: ATP synthase gamma chain (280 aa).

It belongs to the ATPase gamma chain family. In terms of assembly, F-type ATPases have 2 components, CF(1) - the catalytic core - and CF(0) - the membrane proton channel. CF(1) has five subunits: alpha(3), beta(3), gamma(1), delta(1), epsilon(1). CF(0) has three main subunits: a, b and c.

The protein resides in the cell membrane. Produces ATP from ADP in the presence of a proton gradient across the membrane. The gamma chain is believed to be important in regulating ATPase activity and the flow of protons through the CF(0) complex. The sequence is that of ATP synthase gamma chain from Mycoplasma capricolum subsp. capricolum (strain California kid / ATCC 27343 / NCTC 10154).